A 395-amino-acid chain; its full sequence is Pyruvate synthase subunit PorA (395 aa).

In terms of assembly, heterotetramer of one alpha, one beta, one delta and one gamma chain.

The catalysed reaction is 2 oxidized [2Fe-2S]-[ferredoxin] + pyruvate + CoA = 2 reduced [2Fe-2S]-[ferredoxin] + acetyl-CoA + CO2 + H(+). This Pyrococcus horikoshii (strain ATCC 700860 / DSM 12428 / JCM 9974 / NBRC 100139 / OT-3) protein is Pyruvate synthase subunit PorA (porA).